Here is a 155-residue protein sequence, read N- to C-terminus: Small ribosomal subunit protein uS7 (155 aa).

Belongs to the universal ribosomal protein uS7 family. As to quaternary structure, part of the 30S ribosomal subunit. Contacts proteins S9 and S11.

In terms of biological role, one of the primary rRNA binding proteins, it binds directly to 16S rRNA where it nucleates assembly of the head domain of the 30S subunit. Is located at the subunit interface close to the decoding center, probably blocks exit of the E-site tRNA. The chain is Small ribosomal subunit protein uS7 from Thermotoga maritima (strain ATCC 43589 / DSM 3109 / JCM 10099 / NBRC 100826 / MSB8).